A 100-amino-acid polypeptide reads, in one-letter code: Urease subunit gamma (100 aa).

The protein belongs to the urease gamma subunit family. As to quaternary structure, heterotrimer of UreA (gamma), UreB (beta) and UreC (alpha) subunits. Three heterotrimers associate to form the active enzyme.

The protein localises to the cytoplasm. The enzyme catalyses urea + 2 H2O + H(+) = hydrogencarbonate + 2 NH4(+). It participates in nitrogen metabolism; urea degradation; CO(2) and NH(3) from urea (urease route): step 1/1. In Rhodopseudomonas palustris (strain BisB18), this protein is Urease subunit gamma.